Reading from the N-terminus, the 515-residue chain is Fatty acyl-CoA reductase 1 (515 aa).

Residues 1-465 (MVSIPEYYEG…ARKHLNKLRN (465 aa)) are Cytoplasmic-facing. The interval 451 to 507 (SGLPAARKHLNKLRNIRYGFNTILVILIWRIFIARSQMARNIWYFVVSLCYKFLSYF) is necessary and sufficient for PEX19-mediated localization into peroxisome membrane. Residues 466-483 (IRYGFNTILVILIWRIFI) traverse the membrane as a helical segment. Over 484–515 (ARSQMARNIWYFVVSLCYKFLSYFRASSTMRY) the chain is Peroxisomal.

The protein belongs to the fatty acyl-CoA reductase family. As to quaternary structure, interacts with PEX19; PEX19 mediates the targeting of FAR1 to peroxisomes.

It localises to the peroxisome membrane. The enzyme catalyses a long-chain fatty acyl-CoA + 2 NADPH + 2 H(+) = a long-chain primary fatty alcohol + 2 NADP(+) + CoA. It catalyses the reaction hexadecanoyl-CoA + 2 NADPH + 2 H(+) = hexadecan-1-ol + 2 NADP(+) + CoA. It carries out the reaction octadecanoyl-CoA + 2 NADPH + 2 H(+) = octadecan-1-ol + 2 NADP(+) + CoA. The catalysed reaction is (9Z)-octadecenoyl-CoA + 2 NADPH + 2 H(+) = (9Z)-octadecen-1-ol + 2 NADP(+) + CoA. The enzyme catalyses (9Z,12Z)-octadecadienoyl-CoA + 2 NADPH + 2 H(+) = (9Z,12Z)-octadecadien-1-ol + 2 NADP(+) + CoA. It catalyses the reaction eicosanoyl-CoA + 2 NADPH + 2 H(+) = eicosan-1-ol + 2 NADP(+) + CoA. It carries out the reaction 16-methylheptadecanoyl-CoA + 2 NADPH + 2 H(+) = 16-methylheptadecan-1-ol + 2 NADP(+) + CoA. The catalysed reaction is 18-methylnonadecanoyl-CoA + 2 NADPH + 2 H(+) = 18-methylnonadecan-1-ol + 2 NADP(+) + CoA. Catalyzes the reduction of saturated and unsaturated C16 or C18 fatty acyl-CoA to fatty alcohols. It plays an essential role in the production of ether lipids/plasmalogens which synthesis requires fatty alcohols. In parallel, it is also required for wax monoesters production since fatty alcohols also constitute a substrate for their synthesis. This is Fatty acyl-CoA reductase 1 from Pongo abelii (Sumatran orangutan).